Reading from the N-terminus, the 328-residue chain is L-lactate dehydrogenase (328 aa).

NAD(+)-binding positions include Val18, Glu39, Lys46, Tyr71, and 85 to 86 (GA). Substrate contacts are provided by Gln88 and Arg94. NAD(+)-binding positions include Ser107, 124 to 126 (AAN), and Ser149. 126 to 129 (NPVD) contributes to the substrate binding site. 154-157 (DSAR) is a substrate binding site. Beta-D-fructose 1,6-bisphosphate contacts are provided by Arg159 and His174. Catalysis depends on His181, which acts as the Proton acceptor. Tyr226 is modified (phosphotyrosine). Residue Thr235 coordinates substrate.

This sequence belongs to the LDH/MDH superfamily. LDH family. As to quaternary structure, homotetramer.

It localises to the cytoplasm. The catalysed reaction is (S)-lactate + NAD(+) = pyruvate + NADH + H(+). Its pathway is fermentation; pyruvate fermentation to lactate; (S)-lactate from pyruvate: step 1/1. Its activity is regulated as follows. Allosterically activated by fructose 1,6-bisphosphate (FBP). In terms of biological role, catalyzes the conversion of lactate to pyruvate. The sequence is that of L-lactate dehydrogenase from Streptococcus thermophilus (strain ATCC BAA-250 / LMG 18311).